The primary structure comprises 320 residues: Acetyl-coenzyme A carboxylase carboxyl transferase subunit alpha (320 aa).

The CoA carboxyltransferase C-terminal domain maps to 33–294 (AFESEIQALR…GDAVEDELKA (262 aa)).

The protein belongs to the AccA family. In terms of assembly, acetyl-CoA carboxylase is a heterohexamer composed of biotin carboxyl carrier protein (AccB), biotin carboxylase (AccC) and two subunits each of ACCase subunit alpha (AccA) and ACCase subunit beta (AccD).

The protein localises to the cytoplasm. It catalyses the reaction N(6)-carboxybiotinyl-L-lysyl-[protein] + acetyl-CoA = N(6)-biotinyl-L-lysyl-[protein] + malonyl-CoA. It participates in lipid metabolism; malonyl-CoA biosynthesis; malonyl-CoA from acetyl-CoA: step 1/1. In terms of biological role, component of the acetyl coenzyme A carboxylase (ACC) complex. First, biotin carboxylase catalyzes the carboxylation of biotin on its carrier protein (BCCP) and then the CO(2) group is transferred by the carboxyltransferase to acetyl-CoA to form malonyl-CoA. This chain is Acetyl-coenzyme A carboxylase carboxyl transferase subunit alpha, found in Caulobacter sp. (strain K31).